A 194-amino-acid chain; its full sequence is Imidazoleglycerol-phosphate dehydratase (194 aa).

It belongs to the imidazoleglycerol-phosphate dehydratase family.

The protein localises to the cytoplasm. It catalyses the reaction D-erythro-1-(imidazol-4-yl)glycerol 3-phosphate = 3-(imidazol-4-yl)-2-oxopropyl phosphate + H2O. Its pathway is amino-acid biosynthesis; L-histidine biosynthesis; L-histidine from 5-phospho-alpha-D-ribose 1-diphosphate: step 6/9. This is Imidazoleglycerol-phosphate dehydratase from Clostridium kluyveri (strain NBRC 12016).